A 249-amino-acid chain; its full sequence is 1-(5-phosphoribosyl)-5-[(5-phosphoribosylamino)methylideneamino] imidazole-4-carboxamide isomerase (249 aa).

The Proton acceptor role is filled by D8. D129 functions as the Proton donor in the catalytic mechanism.

It belongs to the HisA/HisF family.

Its subcellular location is the cytoplasm. The catalysed reaction is 1-(5-phospho-beta-D-ribosyl)-5-[(5-phospho-beta-D-ribosylamino)methylideneamino]imidazole-4-carboxamide = 5-[(5-phospho-1-deoxy-D-ribulos-1-ylimino)methylamino]-1-(5-phospho-beta-D-ribosyl)imidazole-4-carboxamide. It functions in the pathway amino-acid biosynthesis; L-histidine biosynthesis; L-histidine from 5-phospho-alpha-D-ribose 1-diphosphate: step 4/9. This Magnetococcus marinus (strain ATCC BAA-1437 / JCM 17883 / MC-1) protein is 1-(5-phosphoribosyl)-5-[(5-phosphoribosylamino)methylideneamino] imidazole-4-carboxamide isomerase.